We begin with the raw amino-acid sequence, 235 residues long: Probable inactive serine protease 37 (235 aa).

An N-terminal signal peptide occupies residues M1–S19. The 214-residue stretch at S20–K233 folds into the Peptidase S1 domain. 3 disulfides stabilise this stretch: C40/C56, C131/C198, and C163/C177.

Belongs to the peptidase S1 family.

It localises to the cytoplasmic vesicle. It is found in the secretory vesicle. The protein localises to the acrosome. Its subcellular location is the secreted. Its function is as follows. Plays a role in male fertility. May have a role in sperm migration or binding to zona-intact eggs. Involved in the activation of the proacrosin/acrosin system. In Macaca fascicularis (Crab-eating macaque), this protein is Probable inactive serine protease 37.